Here is a 245-residue protein sequence, read N- to C-terminus: Probable phosphatase ECA2529 (245 aa).

Residues His7, His9, His15, His40, Glu73, His101, His131, Asp192, and His194 each coordinate Zn(2+).

The protein belongs to the PHP family. In terms of assembly, homotrimer. Zn(2+) serves as cofactor.

This chain is Probable phosphatase ECA2529, found in Pectobacterium atrosepticum (strain SCRI 1043 / ATCC BAA-672) (Erwinia carotovora subsp. atroseptica).